A 463-amino-acid polypeptide reads, in one-letter code: Steroidogenic factor 1 (463 aa).

The nuclear receptor DNA-binding region spans 10–85 (DELCPVCGDK…VGMRLEAVRA (76 aa)). An NR C4-type zinc finger spans residues 13–33 (CPVCGDKVSGYHYGLLTCESC). N6-acetyllysine is present on residues K34, K38, and K72. An NR C4-type zinc finger spans residues 49 to 73 (CTESQNCKIDKTQRKRCPYCRFQKC). K119 participates in a covalent cross-link: Glycyl lysine isopeptide (Lys-Gly) (interchain with G-Cter in SUMO). Residues 119–160 (KLETGPSMGPPPQTDYPLAPALHPGAKGLAPAPPAGPPGDYE) form a disordered region. Residues 135–148 (PLAPALHPGAKGLA) are compositionally biased toward low complexity. Residue K193 forms a Glycyl lysine isopeptide (Lys-Gly) (interchain with G-Cter in SUMO) linkage. A disordered region spans residues 197 to 216 (PEPYASPHEPAPPYGYPEPY). S202 bears the Phosphoserine; by CDK7 mark. A compositionally biased stretch (pro residues) spans 205-216 (EPAPPYGYPEPY). The NR LBD domain occupies 224 to 461 (GVPELILKLL…NLLIEMLHAK (238 aa)). A 1,2-diacyl-sn-glycero-3-phosphocholine-binding residues include G343, Y438, and K442.

The protein belongs to the nuclear hormone receptor family. NR5 subfamily. Binds DNA as a monomer. Part of a complex consisting of SFPQ, NONO and NR5A1. Interacts with NR0B2, NCOA2 and PPARGC1A. Interacts with DGKQ and CDK7. Binds to and activated by HIPK3. Post-translationally, acetylation stimulates the transcriptional activity. In terms of processing, sumoylation reduces CDK7-mediated phosphorylation on Ser-202. Phosphorylated on Ser-202 by CDK7. This phosphorylation promotes transcriptional activity. As to expression, expressed in the pre-granulosa and Sertoli cells of the ovary and testis, respectively. In the testis it is also present in the interstitial cells. In the adult ovary it is expressed in the interstitial gland, and in the granulosa cells and theca interna of small to medium-sized antral follicles, but is not expressed in large antral follicles.

Its subcellular location is the nucleus. Transcriptional activator. Seems to be essential for sexual differentiation and formation of the primary steroidogenic tissues. Binds to the Ad4 site found in the promoter region of steroidogenic P450 genes such as CYP11A, CYP11B and CYP21B. Also regulates the AMH/Muellerian inhibiting substance gene as well as the AHCH and STAR genes. 5'-YCAAGGYC-3' and 5'-RRAGGTCA-3' are the consensus sequences for the recognition by NR5A1. The SFPQ-NONO-NR5A1 complex binds to the CYP17 promoter and regulates basal and cAMP-dependent transcriptional activity. Binds phosphatidylcholine and phospholipids with a phosphatidylinositol (PI) headgroup, in particular PI(3,4)P2 and PI(3,4,5)P3. Activated by the phosphorylation of NR5A1 by HIPK3 leading to increased steroidogenic gene expression upon cAMP signaling pathway stimulation. The protein is Steroidogenic factor 1 (NR5A1) of Notamacropus eugenii (Tammar wallaby).